The following is a 214-amino-acid chain: Ras-related protein RABA5c (214 aa).

Gly19–Ser26 is a binding site for GTP. An Effector region motif is present at residues Ser41 to Phe49. GTP is bound by residues Asp67–Gln71, Asn125–Asp128, and Ser155–Ala156. S-geranylgeranyl cysteine attachment occurs at residues Cys211 and Cys212.

This sequence belongs to the small GTPase superfamily. Rab family. Interacts (via C-terminus) with GDI1. Interacts with PUX8/SAY1. Expressed in roots and actively dividing cells.

The protein localises to the golgi apparatus membrane. The protein resides in the golgi apparatus. It is found in the trans-Golgi network membrane. Its subcellular location is the cell membrane. Functionally, intracellular vesicle trafficking and protein transport. Binds GTP and GDP and possesses intrinsic GTPase activity. This chain is Ras-related protein RABA5c (RABA5C), found in Arabidopsis thaliana (Mouse-ear cress).